We begin with the raw amino-acid sequence, 87 residues long: UPF0250 protein NE1487 (87 aa).

The protein belongs to the UPF0250 family.

This Nitrosomonas europaea (strain ATCC 19718 / CIP 103999 / KCTC 2705 / NBRC 14298) protein is UPF0250 protein NE1487.